Here is a 142-residue protein sequence, read N- to C-terminus: Aspartate 1-decarboxylase (142 aa).

The active-site Schiff-base intermediate with substrate; via pyruvic acid is the serine 25. Pyruvic acid (Ser) is present on serine 25. Threonine 57 serves as a coordination point for substrate. The active-site Proton donor is tyrosine 58. 73–75 contacts substrate; it reads GAA.

Belongs to the PanD family. In terms of assembly, heterooctamer of four alpha and four beta subunits. It depends on pyruvate as a cofactor. Post-translationally, is synthesized initially as an inactive proenzyme, which is activated by self-cleavage at a specific serine bond to produce a beta-subunit with a hydroxyl group at its C-terminus and an alpha-subunit with a pyruvoyl group at its N-terminus.

It localises to the cytoplasm. The enzyme catalyses L-aspartate + H(+) = beta-alanine + CO2. It participates in cofactor biosynthesis; (R)-pantothenate biosynthesis; beta-alanine from L-aspartate: step 1/1. Catalyzes the pyruvoyl-dependent decarboxylation of aspartate to produce beta-alanine. The sequence is that of Aspartate 1-decarboxylase from Mycobacterium leprae (strain Br4923).